A 262-amino-acid polypeptide reads, in one-letter code: Glutamate racemase (262 aa).

Residues Asp9–Ser10 and Tyr41–Gly42 each bind substrate. The active-site Proton donor/acceptor is Cys73. Asn74–Thr75 is a binding site for substrate. Cys180 functions as the Proton donor/acceptor in the catalytic mechanism. Position 181-182 (Thr181–His182) interacts with substrate.

It belongs to the aspartate/glutamate racemases family.

It catalyses the reaction L-glutamate = D-glutamate. It participates in cell wall biogenesis; peptidoglycan biosynthesis. Its function is as follows. Provides the (R)-glutamate required for cell wall biosynthesis. In Aliivibrio fischeri (strain ATCC 700601 / ES114) (Vibrio fischeri), this protein is Glutamate racemase.